A 252-amino-acid polypeptide reads, in one-letter code: Cell division protein ZapD (252 aa).

It belongs to the ZapD family. Interacts with FtsZ.

The protein localises to the cytoplasm. Its function is as follows. Cell division factor that enhances FtsZ-ring assembly. Directly interacts with FtsZ and promotes bundling of FtsZ protofilaments, with a reduction in FtsZ GTPase activity. In Dechloromonas aromatica (strain RCB), this protein is Cell division protein ZapD.